Here is a 206-residue protein sequence, read N- to C-terminus: Cytochrome b6-f complex iron-sulfur subunit, chloroplastic (206 aa).

The N-terminal 29 residues, 1–29 (MAMLSSRRVAAPAKASAIRRSRVMPVVRA), are a transit peptide targeting the chloroplast. A helical transmembrane segment spans residues 39-68 (MNKRNIMNLILAGGAGLPITTLALGYGAFF). The Rieske domain maps to 92–188 (AGEWLKTHLA…CDVAESGLVT (97 aa)). Residues Cys-134, His-136, Cys-152, and His-155 each coordinate [2Fe-2S] cluster. Cys-139 and Cys-154 are joined by a disulfide.

The protein belongs to the Rieske iron-sulfur protein family. In terms of assembly, the 4 large subunits of the cytochrome b6-f complex are cytochrome b6, subunit IV (17 kDa polypeptide, petD), cytochrome f and the Rieske protein, while the 4 small subunits are petG, petL, petM and petN. The complex functions as a dimer. [2Fe-2S] cluster is required as a cofactor.

It localises to the plastid. The protein resides in the chloroplast thylakoid membrane. The enzyme catalyses 2 oxidized [plastocyanin] + a plastoquinol + 2 H(+)(in) = 2 reduced [plastocyanin] + a plastoquinone + 4 H(+)(out). Component of the cytochrome b6-f complex, which mediates electron transfer between photosystem II (PSII) and photosystem I (PSI), cyclic electron flow around PSI, and state transitions. This chain is Cytochrome b6-f complex iron-sulfur subunit, chloroplastic (petC), found in Chlamydomonas reinhardtii (Chlamydomonas smithii).